The following is a 218-amino-acid chain: Adenylate kinase (218 aa).

Residue 10–15 (GAGKGT) coordinates ATP. The NMP stretch occupies residues 30 to 59 (STGDMLRAAINEGTPLGLEAKKVMDAGKLV). AMP-binding positions include Thr31, Arg36, 57–59 (KLV), 85–88 (GFPR), and Gln92. Residues 122 to 159 (GRRVHPASGRTYHVLFNPPAKEGVDDITGDPLVQREDD) form an LID region. Residues Arg123 and 132 to 133 (TY) contribute to the ATP site. AMP-binding residues include Arg156 and Arg167. Gly203 contributes to the ATP binding site.

It belongs to the adenylate kinase family. In terms of assembly, monomer.

It localises to the cytoplasm. The catalysed reaction is AMP + ATP = 2 ADP. It participates in purine metabolism; AMP biosynthesis via salvage pathway; AMP from ADP: step 1/1. Functionally, catalyzes the reversible transfer of the terminal phosphate group between ATP and AMP. Plays an important role in cellular energy homeostasis and in adenine nucleotide metabolism. The sequence is that of Adenylate kinase from Chlorobium phaeobacteroides (strain BS1).